Reading from the N-terminus, the 923-residue chain is Smoothelin (923 aa).

Position 2 is an N-acetylalanine (alanine 2). The stretch at 24-89 forms a coiled coil; sequence LAERRRIRSA…ARLAGRLESM (66 aa). Residues 134 to 456 form a disordered region; it reads SRLPSSGPRE…GTGEPGGSMK (323 aa). Composition is skewed to low complexity over residues 164–179 and 192–205; these read QEQQ…TPED and RAPP…PASP. Positions 237–252 are enriched in pro residues; sequence LPHPSEAPSPEPPMSP. Polar residues-rich tracts occupy residues 272–285 and 293–314; these read PSDT…FSNT and TKSC…NREP. Phosphoserine occurs at positions 299, 301, 304, and 340. Phosphothreonine occurs at positions 359 and 372. A compositionally biased stretch (low complexity) spans 366 to 389; that stretch reads PSLISTTPASSSSSNSSSPSPSDT. 3 positions are modified to phosphoserine: serine 501, serine 521, and serine 574. Disordered regions lie at residues 542–578 and 615–772; these read KMEP…PLSA and QRKR…ARKA. Positions 601–628 form a coiled coil; that stretch reads EERKLIRAALRELRQRKRDQRDKERERR. Residues 615–638 are compositionally biased toward basic and acidic residues; the sequence is QRKRDQRDKERERRLREARARPGE. The residue at position 641 (serine 641) is a Phosphoserine. Polar residues predominate over residues 674–687; the sequence is NDGTQTARTTTVES. Residues 697–721 show a composition bias toward low complexity; that stretch reads SSSSSTTTTTVQTKSFSSSSSSSSS. A Phosphoserine modification is found at serine 735. A compositionally biased stretch (basic and acidic residues) spans 744-756; the sequence is LERRQAEKKKELM. Phosphoserine is present on serine 798. The 108-residue stretch at 805 to 912 folds into the Calponin-homology (CH) domain; the sequence is NSIKQMLLDW…YVQSLYNHLR (108 aa).

The protein belongs to the smoothelin family.

The protein resides in the cytoplasm. The protein localises to the cytoskeleton. Functionally, structural protein of the cytoskeleton. The chain is Smoothelin (Smtn) from Mus musculus (Mouse).